We begin with the raw amino-acid sequence, 160 residues long: Eosinophil cationic protein (160 aa).

The first 27 residues, 1–27, serve as a signal peptide directing secretion; it reads MVPKLFTPQICLLLLLGLMGVEGSLHA. The required for nearly all of the bactericidal activities; partially involved in LPS-binding stretch occupies residues 28–72; it reads RPPQFTKAQWFAIQHINVNPPRCTIAMRVINNYQRRCKNQNTFLR. His-42 acts as the Proton acceptor in catalysis. Intrachain disulfides connect Cys-50/Cys-110, Cys-64/Cys-123, Cys-82/Cys-138, and Cys-89/Cys-98. Tyr-60 is subject to 3'-nitrotyrosine. 65–69 is a binding site for substrate; that stretch reads KNQNT. N-linked (GlcNAc...) asparagine glycosylation is found at Asn-84, Asn-92, and Asn-119. The active-site Proton donor is the His-155.

The protein belongs to the pancreatic ribonuclease family. As to quaternary structure, interacts with bacterial lipopolysaccharide (LPS) and lipoteichoic acid (LTA). In vitro interacts with phospholipid bilayers.

It is found in the secreted. In terms of biological role, cytotoxin and helminthotoxin with low-efficiency ribonuclease activity. Possesses a wide variety of biological activities. Exhibits antibacterial activity. The protein is Eosinophil cationic protein (RNASE3) of Macaca nemestrina (Pig-tailed macaque).